A 141-amino-acid polypeptide reads, in one-letter code: Large ribosomal subunit protein bL17 (141 aa).

Belongs to the bacterial ribosomal protein bL17 family. In terms of assembly, part of the 50S ribosomal subunit. Contacts protein L32.

This Agrobacterium fabrum (strain C58 / ATCC 33970) (Agrobacterium tumefaciens (strain C58)) protein is Large ribosomal subunit protein bL17.